The primary structure comprises 150 residues: PTS system galactitol-specific EIIA component (150 aa).

One can recognise a PTS EIIA type-2 domain in the interval 1-144; sequence MTNLFVRSGI…TQLKEYFTKY (144 aa). Residue His62 is the Tele-phosphohistidine intermediate of the active site. The residue at position 62 (His62) is a Phosphohistidine; by HPr.

Forms a complex with one each of subunit of GatA, GatB and 2 subunits of GatC.

It is found in the cytoplasm. In terms of biological role, the phosphoenolpyruvate-dependent sugar phosphotransferase system (sugar PTS), a major carbohydrate active transport system, catalyzes the phosphorylation of incoming sugar substrates concomitantly with their translocation across the cell membrane. The enzyme II complex composed of GatA, GatB and GatC is involved in galactitol transport. This chain is PTS system galactitol-specific EIIA component (gatA), found in Escherichia coli O157:H7.